Consider the following 298-residue polypeptide: Homoserine kinase (298 aa).

92 to 102 (PLARGLGSSAT) is an ATP binding site.

Belongs to the GHMP kinase family. Homoserine kinase subfamily.

The protein localises to the cytoplasm. It catalyses the reaction L-homoserine + ATP = O-phospho-L-homoserine + ADP + H(+). It functions in the pathway amino-acid biosynthesis; L-threonine biosynthesis; L-threonine from L-aspartate: step 4/5. Its function is as follows. Catalyzes the ATP-dependent phosphorylation of L-homoserine to L-homoserine phosphate. This chain is Homoserine kinase (thrB), found in Nostoc sp. (strain PCC 7120 / SAG 25.82 / UTEX 2576).